The chain runs to 158 residues: Phospholipase A2 AP-PLA2-II (158 aa).

The signal sequence occupies residues 1–16 (MKTFLILAMAVALAKA). A propeptide spanning residues 17–23 (QSTDEIT) is cleaved from the precursor. 6 disulfide bridges follow: Cys-51-Cys-158, Cys-53-Cys-69, Cys-68-Cys-138, Cys-75-Cys-131, Cys-85-Cys-124, and Cys-109-Cys-129. Ca(2+) is bound by residues Gly-54 and Gly-56. The active site involves His-72. Ca(2+) is bound at residue Asp-73. Asp-132 is a catalytic residue.

The protein belongs to the phospholipase A2 family. Group I subfamily. In terms of assembly, monomer. The cofactor is Ca(2+). In terms of tissue distribution, expressed by the venom gland.

It localises to the secreted. The enzyme catalyses a 1,2-diacyl-sn-glycero-3-phosphocholine + H2O = a 1-acyl-sn-glycero-3-phosphocholine + a fatty acid + H(+). Functionally, starfish phospholipase A2 (PLA2) that has hemorrhagic and capillary permeability-increasing activities and hence is considered to be deeply involved in the local inflammation. Shows hemolytic activity only in the presence of phosphatidylcholine (PC). PLA2 catalyzes the calcium-dependent hydrolysis of the 2-acyl groups in 3-sn-phosphoglycerides. The protein is Phospholipase A2 AP-PLA2-II of Acanthaster planci (Crown-of-thorns starfish).